We begin with the raw amino-acid sequence, 180 residues long: CASP-like protein 5A1 (180 aa).

The Cytoplasmic segment spans residues Met-1–Leu-36. A helical membrane pass occupies residues Gly-37–Val-57. Residues Ser-58–Ala-67 are Extracellular-facing. The chain crosses the membrane as a helical span at residues Phe-68–Val-88. Residues Asp-89 to Ser-102 are Cytoplasmic-facing. Residues Leu-103–Ala-123 form a helical membrane-spanning segment. Over Cys-124–Ala-150 the chain is Extracellular. A helical membrane pass occupies residues Ala-151–Trp-171. Topologically, residues Ser-172 to Phe-180 are cytoplasmic.

Belongs to the Casparian strip membrane proteins (CASP) family. Homodimer and heterodimers.

The protein localises to the cell membrane. The chain is CASP-like protein 5A1 from Pteridium aquilinum subsp. aquilinum (Bracken fern).